A 388-amino-acid chain; its full sequence is Norsolorinic acid reductase A (388 aa).

Residue aspartate 69 participates in NADP(+) binding. Catalysis depends on tyrosine 74, which acts as the Proton donor. A substrate-binding site is contributed by histidine 148. NADP(+) is bound by residues 178–179, glutamine 204, 233–243, and 300–308; these read SD, GVLGRGQFRSA, and RKVEHLKEN.

It belongs to the aldo/keto reductase family. Aldo/keto reductase 2 subfamily.

It participates in mycotoxin biosynthesis; aflatoxin biosynthesis. Functionally, norsolorinic acid reductase; part of the gene cluster that mediates the biosynthesis of aflatoxins, a group of polyketide-derived furanocoumarins, and part of the most toxic and carcinogenic compounds among the known mycotoxins. The four major aflatoxins produced by A.parasiticus are aflatoxin B1 (AFB1), aflatoxin B2 (AFB2), aflatoxin G1 (AFG1) and aflatoxin G2 (AFG2). Within the aflatoxin pathway, the norsolorinic acid reductase aflE may play a role in the conversion of norsolorinic acid (NOR) to averantin (AVN). The biosynthesis of aflatoxins begins with the norsolorinic acid synthase aflC that combines a hexanoyl starter unit produced by the fatty acid synthase aflA/aflB and 7 malonyl-CoA extender units to synthesize the precursor NOR. The second step is the conversion of NOR to averantin and requires the norsolorinic acid ketoreductase aflD, which catalyzes the dehydration of norsolorinic acid to form (1'S)-averantin. The norsolorinic acid reductases aflE and aflF may also play a role in the conversion of NOR to AVN. The cytochrome P450 monooxygenase aflG then catalyzes the hydroxylation of AVN to 5'hydroxyaverantin (HAVN). The next step is performed by the 5'-hydroxyaverantin dehydrogenase aflH that transforms HAVN to 5'-oxoaverantin (OAVN) which is further converted to averufin (AVF) by aflK that plays a dual role in the pathway, as a 5'-oxoaverantin cyclase that mediates conversion of 5'-oxoaverantin, as well as a versicolorin B synthase in a later step in the pathway. The averufin oxidase aflI catalyzes the conversion of AVF to versiconal hemiacetal acetate (VHA). VHA is then the substrate for the versiconal hemiacetal acetate esterase aflJ to yield versiconal (VAL). Versicolorin B synthase aflK then converts VAL to versicolorin B (VERB) by closing the bisfuran ring of aflatoxin which is required for DNA-binding, thus giving to aflatoxin its activity as a mutagen. Then, the activity of the versicolorin B desaturase aflL leads to versicolorin A (VERA). A branch point starts from VERB since it can also be converted to dihydrodemethylsterigmatocystin (DMDHST), probably also by aflL, VERA being a precursor for aflatoxins B1 and G1, and DMDHST for aflatoxins B2 and G2. Next, the versicolorin reductase aflM and the cytochrome P450 monooxygenase aflN are involved in conversion of VERA to demethylsterigmatocystin (DMST). AflX and aflY seem also involved in this step, through probable aflX-mediated epoxide ring-opening step following versicolorin A oxidation and aflY-mediated Baeyer-Villiger oxidation required for the formation of the xanthone ring. The methyltransferase aflO then leads to the modification of DMST to sterigmatocystin (ST), and of DMDHST to dihydrosterigmatocystin (DHST). Both ST and DHST are then substrates of the O-methyltransferase aflP to yield O-methylsterigmatocystin (OMST) and dihydro-O-methylsterigmatocystin (DHOMST), respectively. Finally OMST is converted to aflatoxins B1 and G1, and DHOMST to aflatoxins B2 and G2, via the action of several enzymes including O-methylsterigmatocystin oxidoreductase aflQ, the cytochrome P450 monooxygenase aflU, but also the NADH-dependent flavin oxidoreductase nadA which is specifically required for the synthesis of AFG1. The protein is Norsolorinic acid reductase A of Aspergillus parasiticus (strain ATCC 56775 / NRRL 5862 / SRRC 143 / SU-1).